Consider the following 484-residue polypeptide: tRNA sulfurtransferase (484 aa).

Residues 63-167 form the THUMP domain; the sequence is REMIERLTCT…LDRLFVIHRQ (105 aa). ATP is bound by residues 185 to 186, Lys-267, Gly-289, and Gln-298; that span reads LM. Cys-346 and Cys-457 form a disulfide bridge. Positions 405 to 483 constitute a Rhodanese domain; that stretch reads VLPGQIVIDI…GHTNVRVYRP (79 aa). Cys-457 serves as the catalytic Cysteine persulfide intermediate.

The protein belongs to the ThiI family.

It is found in the cytoplasm. The catalysed reaction is [ThiI sulfur-carrier protein]-S-sulfanyl-L-cysteine + a uridine in tRNA + 2 reduced [2Fe-2S]-[ferredoxin] + ATP + H(+) = [ThiI sulfur-carrier protein]-L-cysteine + a 4-thiouridine in tRNA + 2 oxidized [2Fe-2S]-[ferredoxin] + AMP + diphosphate. It carries out the reaction [ThiS sulfur-carrier protein]-C-terminal Gly-Gly-AMP + S-sulfanyl-L-cysteinyl-[cysteine desulfurase] + AH2 = [ThiS sulfur-carrier protein]-C-terminal-Gly-aminoethanethioate + L-cysteinyl-[cysteine desulfurase] + A + AMP + 2 H(+). Its pathway is cofactor biosynthesis; thiamine diphosphate biosynthesis. Catalyzes the ATP-dependent transfer of a sulfur to tRNA to produce 4-thiouridine in position 8 of tRNAs, which functions as a near-UV photosensor. Also catalyzes the transfer of sulfur to the sulfur carrier protein ThiS, forming ThiS-thiocarboxylate. This is a step in the synthesis of thiazole, in the thiamine biosynthesis pathway. The sulfur is donated as persulfide by IscS. This Pseudomonas paraeruginosa (strain DSM 24068 / PA7) (Pseudomonas aeruginosa (strain PA7)) protein is tRNA sulfurtransferase.